The sequence spans 79 residues: Short neurotoxin 4 (79 aa).

The first 21 residues, 1–21 (MKTLLLTLVMVTIMCLDLGYT), serve as a signal peptide directing secretion. 3 disulfide bridges follow: cysteine 24–cysteine 41, cysteine 34–cysteine 59, and cysteine 63–cysteine 71.

This sequence belongs to the three-finger toxin family. Short-chain subfamily. Type III alpha-neurotoxin sub-subfamily. As to expression, expressed by the venom gland.

It localises to the secreted. In terms of biological role, binds with high affinity to muscle nicotinic acetylcholine receptor (nAChR) and hinders acetylcholine binding to the receptor, thereby impairing neuromuscular transmission. Causes muscle paralysis, spasms and increased respiration. The chain is Short neurotoxin 4 from Pseudonaja textilis (Eastern brown snake).